Consider the following 763-residue polypeptide: Amine oxidase [copper-containing] 3 (763 aa).

Over methionine 1–threonine 5 the chain is Cytoplasmic. A helical; Signal-anchor for type II membrane protein membrane pass occupies residues isoleucine 6–valine 26. Residues glycine 27–asparagine 763 lie on the Extracellular side of the membrane. O-linked (GalNAc...) serine glycosylation occurs at serine 43. N-linked (GlcNAc...) asparagine glycosylation occurs at asparagine 137. Cysteine 198 and cysteine 199 are joined by a disulfide. Threonine 212 is a glycosylation site (O-linked (GalNAc...) threonine). 2 N-linked (GlcNAc...) asparagine glycosylation sites follow: asparagine 232 and asparagine 294. Aspartate 386 acts as the Proton acceptor in catalysis. A disulfide bridge connects residues cysteine 404 and cysteine 430. Tyrosine 471 (schiff-base intermediate with substrate; via topaquinone) is an active-site residue. Tyrosine 471 carries the post-translational modification 2',4',5'-topaquinone. 2 residues coordinate Cu(2+): histidine 520 and histidine 522. Ca(2+)-binding residues include aspartate 529, leucine 530, aspartate 531, and glutamate 572. Residue asparagine 592 is glycosylated (N-linked (GlcNAc...) (complex) asparagine). N-linked (GlcNAc...) asparagine glycosylation occurs at asparagine 618. 3 residues coordinate Ca(2+): glutamate 641, phenylalanine 663, and asparagine 665. Asparagine 666 carries N-linked (GlcNAc...) asparagine glycosylation. Ca(2+)-binding residues include glutamate 667, aspartate 673, and leucine 674. O-linked (GlcNAc) threonine glycosylation is present at threonine 679. Histidine 684 is a binding site for Cu(2+). Residues cysteine 734 and cysteine 741 are joined by a disulfide bond.

It belongs to the copper/topaquinone oxidase family. Homodimer; disulfide-linked. Can heterodimerize with isoform 2 leading to reduced surface expression. Probably forms heterodimers with AOC2. Cu(2+) is required as a cofactor. Ca(2+) serves as cofactor. The cofactor is L-topaquinone. In terms of processing, topaquinone (TPQ) is generated by copper-dependent autoxidation of a specific tyrosyl residue. N- and O-glycosylated. As to expression, strongly expressed on the high endothelial venules of peripheral lymph nodes and on hepatic endothelia. Also highly expressed in appendix, lung and small intestine. Expressed also in adipose tissue, in bone marrow, colon, heart, kidney, ovary, pancreas, placenta, prostate, skeletal muscle, spleen and testis. Isoform 2 seems to be the predominant transcript in fetal kidneys, fetal cartilage and fetal tonsils. The highest relative expression of isoform 2 occurs in skeletal muscle, heart, pancreas, kidney, and lung.

Its subcellular location is the cell membrane. The catalysed reaction is methylamine + O2 + H2O = formaldehyde + H2O2 + NH4(+). It carries out the reaction benzylamine + O2 + H2O = benzaldehyde + H2O2 + NH4(+). The enzyme catalyses 2-phenylethylamine + O2 + H2O = 2-phenylacetaldehyde + H2O2 + NH4(+). In terms of biological role, catalyzes the oxidative deamination of primary amines to the corresponding aldehydes with the concomitant production of hydrogen peroxide and ammonia. Has a preference for the primary monoamines methylamine and benzylamine. Could also act on 2-phenylethylamine but much less efficiently. At endothelial cells surface can also function as a cell adhesion protein that participates in lymphocyte extravasation and recirculation by mediating the binding of lymphocytes to peripheral lymph node vascular endothelial cells in an L-selectin-independent fashion. Functionally, has no semicarbazide-sensitive amine oxidase (SSAO) activity. This is Amine oxidase [copper-containing] 3 from Homo sapiens (Human).